Reading from the N-terminus, the 386-residue chain is Centrosomal protein of 44 kDa (386 aa).

A binds with microtubules and centrioles region spans residues 11-194 (RKLEQVLRSL…GVPEGTVTST (184 aa)). Residues 232–262 (ELTALQIALAECQEKLKKLTWIEKRLECLEA) are a coiled coil. S329 bears the Phosphoserine mark. Residues 359–382 (SEETTMQKMERMKKMFEETAELLK) are a coiled coil.

As to quaternary structure, interacts with CROCC. Interacts with POC1B; the interaction is direct and recruits POC1B to centriolar microtubules. Binds to centriolar microtubules.

It localises to the cytoplasm. The protein localises to the cytoskeleton. Its subcellular location is the microtubule organizing center. It is found in the centrosome. The protein resides in the centriole. It localises to the spindle pole. The protein localises to the midbody. Its function is as follows. Centriole-enriched microtubule-binding protein involved in centriole biogenesis. In collaboration with CEP295 and POC1B, is required for the centriole-to-centrosome conversion by ensuring the formation of bona fide centriole wall. Functions as a linker component that maintains centrosome cohesion. Associates with CROCC and regulates its stability and localization to the centrosome. This is Centrosomal protein of 44 kDa (Cep44) from Rattus norvegicus (Rat).